The primary structure comprises 408 residues: Putative FBD-associated F-box protein At5g50270 (408 aa).

An F-box domain is found at 1–54; that stretch reads MDRISGLPDELLLRVLSLLPNVKDVVVTMVLSKRWQFLWMMVPKLVYDDSYQNL. In terms of domain architecture, FBD spans 345 to 408; that stretch reads PLRDDLSSVP…VNPDKKYEMI (64 aa).

This Arabidopsis thaliana (Mouse-ear cress) protein is Putative FBD-associated F-box protein At5g50270.